A 250-amino-acid polypeptide reads, in one-letter code: Ribonuclease HII (250 aa).

The RNase H type-2 domain maps to 66-250 (QLVAGVDEVG…SFAPVSEYEK (185 aa)). The a divalent metal cation site is built by D72, E73, and D164.

This sequence belongs to the RNase HII family. The cofactor is Mn(2+). It depends on Mg(2+) as a cofactor.

Its subcellular location is the cytoplasm. It catalyses the reaction Endonucleolytic cleavage to 5'-phosphomonoester.. In terms of biological role, endonuclease that specifically degrades the RNA of RNA-DNA hybrids. The chain is Ribonuclease HII from Lactobacillus gasseri (strain ATCC 33323 / DSM 20243 / BCRC 14619 / CIP 102991 / JCM 1131 / KCTC 3163 / NCIMB 11718 / NCTC 13722 / AM63).